Reading from the N-terminus, the 484-residue chain is Cysteine--tRNA ligase (484 aa).

Cys-29 serves as a coordination point for Zn(2+). The short motif at 31–41 (ITVYDYCHLGH) is the 'HIGH' region element. Zn(2+) contacts are provided by Cys-215, His-240, and Glu-244. A 'KMSKS' region motif is present at residues 272–276 (KMSKS). Lys-275 serves as a coordination point for ATP.

The protein belongs to the class-I aminoacyl-tRNA synthetase family. As to quaternary structure, monomer. The cofactor is Zn(2+).

The protein resides in the cytoplasm. The catalysed reaction is tRNA(Cys) + L-cysteine + ATP = L-cysteinyl-tRNA(Cys) + AMP + diphosphate. This chain is Cysteine--tRNA ligase, found in Rippkaea orientalis (strain PCC 8801 / RF-1) (Cyanothece sp. (strain PCC 8801)).